The chain runs to 585 residues: Squalene epoxidase 2, mitochondrial (585 aa).

The N-terminal 45 residues, 1 to 45, are a transit peptide targeting the mitochondrion; that stretch reads MKPFVIRNLPRFQSTLRSSLLYTNHRPSSRFSLSTRRFTTGATYI. The helical transmembrane segment at 70–90 threads the bilayer; it reads AKIALDQFIASLFTFLLLYIL. FAD is bound by residues 132-133, 152-153, arginine 160, arginine 231, valine 247, aspartate 409, and methionine 422; these read VA and ER. 3 helical membrane-spanning segments follow: residues 493 to 513, 520 to 540, and 545 to 565; these read FDYL…LSGL, LVLH…LPFP, and FWLG…IIKA.

It belongs to the squalene monooxygenase family. Requires FAD as cofactor. As to expression, expressed mainly in inflorescences. Detected in seedlings, leaves, stems, and siliques.

The protein localises to the mitochondrion membrane. The enzyme catalyses squalene + reduced [NADPH--hemoprotein reductase] + O2 = (S)-2,3-epoxysqualene + oxidized [NADPH--hemoprotein reductase] + H2O + H(+). It functions in the pathway terpene metabolism; lanosterol biosynthesis; lanosterol from farnesyl diphosphate: step 2/3. Its function is as follows. Catalyzes the stereospecific oxidation of squalene to (S)-2,3-epoxysqualene, and is considered to be a rate-limiting enzyme in steroid biosynthesis. Produces primarily oxidosqualene. The polypeptide is Squalene epoxidase 2, mitochondrial (SQE2) (Arabidopsis thaliana (Mouse-ear cress)).